Consider the following 346-residue polypeptide: Ribonucleoside-diphosphate reductase subunit beta (346 aa).

Fe cation-binding residues include E89, E120, and H123. The active site involves Y129. The Fe cation site is built by E193, E227, and H230.

It belongs to the ribonucleoside diphosphate reductase small chain family. As to quaternary structure, tetramer of two alpha and two beta subunits. Fe cation is required as a cofactor.

The enzyme catalyses a 2'-deoxyribonucleoside 5'-diphosphate + [thioredoxin]-disulfide + H2O = a ribonucleoside 5'-diphosphate + [thioredoxin]-dithiol. Functionally, provides the precursors necessary for DNA synthesis. Catalyzes the biosynthesis of deoxyribonucleotides from the corresponding ribonucleotides. This Chlamydia muridarum (strain MoPn / Nigg) protein is Ribonucleoside-diphosphate reductase subunit beta (nrdB).